A 493-amino-acid polypeptide reads, in one-letter code: Voltage-gated potassium channel regulatory subunit KCNF1 (493 aa).

Residues 1–183 (MDASAEQSLP…KPESSCPARV (183 aa)) are Cytoplasmic-facing. A helical transmembrane segment spans residues 184–204 (VAVLSFLLILVSSVVMCMGTI). Over 205 to 223 (PELQVVDSEGNRVEHPTLE) the chain is Extracellular. The chain crosses the membrane as a helical span at residues 224-244 (NVETACIGWFTLEYLLRLFSS). Over 245-249 (PNKLH) the chain is Cytoplasmic. The helical transmembrane segment at 250 to 270 (FALSFMNIVDVLAILPFYVSL) threads the bilayer. The Extracellular segment spans residues 271–289 (TLTHLGARMMELTNVQQAV). A helical; Voltage-sensor membrane pass occupies residues 290–310 (QALRIMRIARIFKLARHSSGL). Residues 311-324 (QTLTYALKRSFKEL) lie on the Cytoplasmic side of the membrane. A helical transmembrane segment spans residues 325-345 (GLLLMYLAVGIFVFSALGYTM). Over 346-357 (EQSHPETLFKSI) the chain is Extracellular. The pore-forming intramembrane region spans 358-378 (PQSFWWAIITMTTVGYGDIYP). The Selectivity filter signature appears at 370–375 (TVGYGD). The Extracellular portion of the chain corresponds to 379 to 385 (KTTLGKL). The helical transmembrane segment at 386–406 (NAAISFLCGVIAIALPIHPII) threads the bilayer. Residues 407–493 (NNFVRYYNKQ…HHRTRLQSCK (87 aa)) are Cytoplasmic-facing. Residues 433–468 (NSSSAESKPGGSRSDLDTLPPEPAAREGPSWGSRLK) are disordered.

The protein belongs to the potassium channel family. F (TC 1.A.1.2) subfamily. Kv5.1/KCNF1 sub-subfamily. As to quaternary structure, heterotetramer with KCNB1 or KCNB2. As to expression, expressed in brain namely in the piriform cortex, olfactory tubercle, and medial habenular nucleus. Also expressed in the medial amygdaloid nuclei and the lateral amygdaloid area.

It localises to the cell membrane. In terms of biological role, regulatory alpha-subunit of the voltage-gated potassium (Kv) channel which, when coassembled with KCNB1 or KCNB2, can modulate their expression and their gating kinetics by acting on deactivation upon repolarization and inactivation during maintained depolarization. Accelerates inactivation but has relatively little effect on deactivation. Coexpression with KCNB1 or KCNB2 markedly slows inactivation. Each modulatory subunit has its own specific properties of regulation, and can lead to extensive inhibitions, to large changes in kinetics, and/or to large shifts in the voltage dependencies of the inactivation process. The gating kinetics depends on the nature and stoichiometry of the associated regulatory sunbunit. Fails to produce a potassium current when expressed alone. This Rattus norvegicus (Rat) protein is Voltage-gated potassium channel regulatory subunit KCNF1.